Here is a 489-residue protein sequence, read N- to C-terminus: Rhamnulokinase (489 aa).

13–17 is a binding site for ATP; that stretch reads ASSGR. Cys68 and Cys222 are oxidised to a cystine. Residues Gly83 and 236 to 238 each bind substrate; that span reads HDT. Asp237 functions as the Proton acceptor in the catalytic mechanism. Residue Thr259 coordinates ATP. Asn296 is a binding site for substrate. Gln304 is an ATP binding site. A disulfide bond links Cys353 and Cys370. Position 402 (Gly402) interacts with ATP. A disulfide bridge links Cys413 with Cys417.

Belongs to the rhamnulokinase family. The cofactor is Mg(2+).

The catalysed reaction is L-rhamnulose + ATP = L-rhamnulose 1-phosphate + ADP + H(+). Its pathway is carbohydrate degradation; L-rhamnose degradation; glycerone phosphate from L-rhamnose: step 2/3. In terms of biological role, involved in the catabolism of L-rhamnose (6-deoxy-L-mannose). Catalyzes the transfer of the gamma-phosphate group from ATP to the 1-hydroxyl group of L-rhamnulose to yield L-rhamnulose 1-phosphate. This chain is Rhamnulokinase, found in Enterobacter sp. (strain 638).